A 182-amino-acid chain; its full sequence is Peptidoglycan-recognition protein SB2 (182 aa).

The signal sequence occupies residues 1–17; sequence MKLQLALVLCGLTLALG. An N-acetylmuramoyl-L-alanine amidase domain is found at 40 to 165; it reads PVRLIIIHHT…CQTKATACPG (126 aa). Histidine 47 contacts Zn(2+). Cysteine 54 and cysteine 60 form a disulfide bridge. N-linked (GlcNAc...) asparagine glycosylation is present at asparagine 149. Residues histidine 155 and cysteine 163 each coordinate Zn(2+).

The protein belongs to the N-acetylmuramoyl-L-alanine amidase 2 family. Requires Zn(2+) as cofactor.

The protein localises to the secreted. The enzyme catalyses Hydrolyzes the link between N-acetylmuramoyl residues and L-amino acid residues in certain cell-wall glycopeptides.. N-acetylmuramyl-L-alanine amidase involved in innate immunity by degrading bacterial peptidoglycans (PGN). Probably plays a scavenger role by digesting biologically active PGN into biologically inactive fragments. Has no direct bacteriolytic activity. This Drosophila melanogaster (Fruit fly) protein is Peptidoglycan-recognition protein SB2 (PGRP-SB2).